The primary structure comprises 152 residues: Superoxide dismutase [Cu-Zn] (152 aa).

A lipid anchor (S-palmitoyl cysteine) is attached at cysteine 7. Cu cation-binding residues include histidine 47, histidine 49, and histidine 64. Cysteines 58 and 146 form a disulfide. Zn(2+)-binding residues include histidine 64, histidine 72, histidine 81, and aspartate 84. Histidine 120 is a Cu cation binding site.

This sequence belongs to the Cu-Zn superoxide dismutase family. As to quaternary structure, homodimer. Requires Cu cation as cofactor. It depends on Zn(2+) as a cofactor.

It localises to the cytoplasm. The protein resides in the nucleus. It carries out the reaction 2 superoxide + 2 H(+) = H2O2 + O2. Destroys radicals which are normally produced within the cells and which are toxic to biological systems. The sequence is that of Superoxide dismutase [Cu-Zn] (sod1) from Xiphias gladius (Swordfish).